A 213-amino-acid polypeptide reads, in one-letter code: Kynurenine formamidase (213 aa).

W18 contacts substrate. 3 residues coordinate Zn(2+): H48, H52, and D54. H58 serves as the catalytic Proton donor/acceptor. The Zn(2+) site is built by H160 and E172.

Belongs to the Cyclase 1 superfamily. KynB family. In terms of assembly, homodimer. It depends on Zn(2+) as a cofactor.

The enzyme catalyses N-formyl-L-kynurenine + H2O = L-kynurenine + formate + H(+). It functions in the pathway amino-acid degradation; L-tryptophan degradation via kynurenine pathway; L-kynurenine from L-tryptophan: step 2/2. Catalyzes the hydrolysis of N-formyl-L-kynurenine to L-kynurenine, the second step in the kynurenine pathway of tryptophan degradation. This Burkholderia ambifaria (strain MC40-6) protein is Kynurenine formamidase.